Consider the following 287-residue polypeptide: MSQASPLPRYAVIGNPVAHSRSPQIHAMFSSQTGKPLQYERLLAPVDGFAATVQAFREQGGLGLNVTVPFKEEACQLAGAHLSERARLAGAVNTLWLRDGAWHGCNTDGVGLVSDLLRLGVVLEGARVLLVGAGGAARGVLQPLAAAGCARIHIVNRSAQRAHDLAAGWAAAGAVPGTRVTAGALAEAGVAGGWNVVVNATASSLQGAAPELPRGLYAPDALAYDMMYAAHPTAFMRQATDDGAARTADGLGMLVGQAAESFLIWHGVRPDPSPVLTALRATLLAKD.

Shikimate-binding positions include 20-22 (SRS) and threonine 67. The Proton acceptor role is filled by lysine 71. Glutamate 84 provides a ligand contact to NADP(+). 2 residues coordinate shikimate: asparagine 93 and aspartate 108. NADP(+) contacts are provided by residues 132 to 136 (GAGGA) and methionine 226. Position 228 (tyrosine 228) interacts with shikimate. Glycine 250 contacts NADP(+).

It belongs to the shikimate dehydrogenase family. In terms of assembly, homodimer.

The catalysed reaction is shikimate + NADP(+) = 3-dehydroshikimate + NADPH + H(+). The protein operates within metabolic intermediate biosynthesis; chorismate biosynthesis; chorismate from D-erythrose 4-phosphate and phosphoenolpyruvate: step 4/7. Involved in the biosynthesis of the chorismate, which leads to the biosynthesis of aromatic amino acids. Catalyzes the reversible NADPH linked reduction of 3-dehydroshikimate (DHSA) to yield shikimate (SA). This Bordetella petrii (strain ATCC BAA-461 / DSM 12804 / CCUG 43448) protein is Shikimate dehydrogenase (NADP(+)).